Consider the following 84-residue polypeptide: Cell division topological specificity factor (84 aa).

It belongs to the MinE family.

Its function is as follows. Prevents the cell division inhibition by proteins MinC and MinD at internal division sites while permitting inhibition at polar sites. This ensures cell division at the proper site by restricting the formation of a division septum at the midpoint of the long axis of the cell. In Pseudomonas entomophila (strain L48), this protein is Cell division topological specificity factor.